The chain runs to 317 residues: Pantothenate kinase (317 aa).

An ATP-binding site is contributed by 101 to 108 (GSVAVGKS).

This sequence belongs to the prokaryotic pantothenate kinase family.

The protein localises to the cytoplasm. It catalyses the reaction (R)-pantothenate + ATP = (R)-4'-phosphopantothenate + ADP + H(+). It functions in the pathway cofactor biosynthesis; coenzyme A biosynthesis; CoA from (R)-pantothenate: step 1/5. The protein is Pantothenate kinase of Actinobacillus succinogenes (strain ATCC 55618 / DSM 22257 / CCUG 43843 / 130Z).